The primary structure comprises 279 residues: Dehydrogenase/reductase SDR family member 4 (279 aa).

37 to 61 contacts NADP(+); sequence LVTASTDGIGFAIARRLAEDGAHVV. Lysine 93 is subject to N6-acetyllysine; alternate. Lysine 93 is subject to N6-succinyllysine; alternate. Position 106 is an N6-acetyllysine (lysine 106). A substrate-binding site is contributed by serine 170. Tyrosine 183 acts as the Proton acceptor in catalysis. Lysine 187 provides a ligand contact to NADP(+). The residue at position 217 (lysine 217) is an N6-acetyllysine; alternate. An N6-succinyllysine; alternate modification is found at lysine 217. Serine 221 is modified (phosphoserine). An N6-succinyllysine mark is found at lysine 228 and lysine 235. The short motif at 277-279 is the Peroxisomal targeting signal element; sequence SRL.

This sequence belongs to the short-chain dehydrogenases/reductases (SDR) family. Homotetramer.

Its subcellular location is the peroxisome. It carries out the reaction a secondary alcohol + NADP(+) = a ketone + NADPH + H(+). The enzyme catalyses 3alpha-hydroxy-5beta-pregnan-20-one + NADP(+) = 5beta-pregnan-3,20-dione + NADPH + H(+). The catalysed reaction is 5beta-dihydrotestosterone + NADPH + H(+) = 5beta-androstane-3alpha,17beta-diol + NADP(+). It catalyses the reaction all-trans-retinol + NADP(+) = all-trans-retinal + NADPH + H(+). It carries out the reaction isatin + NADPH + H(+) = 3-hydroxyindolin-2-one + NADP(+). Functionally, NADPH-dependent oxidoreductase which catalyzes the reduction of a variety of compounds bearing carbonyl groups including ketosteroids, alpha-dicarbonyl compounds, aldehydes, aromatic ketones and quinones. Reduces all-trans-retinal and 9-cis retinal. Reduces 3-ketosteroids and benzil into 3alpha-hydroxysteroids and S-benzoin, respectively, in contrast to the stereoselectivity of primates DHRS4s which produce 3beta-hydroxysteroids and R-benzoin. In the reverse reaction, catalyzes the NADP-dependent oxidation of 3alpha-hydroxysteroids and alcohol, but with much lower efficiency. Involved in the metabolism of 3alpha-hydroxysteroids, retinoid, isatin and xenobiotic carbonyl compounds. This Mus musculus (Mouse) protein is Dehydrogenase/reductase SDR family member 4.